We begin with the raw amino-acid sequence, 121 residues long: UPF0091 protein PH1428 (121 aa).

This sequence belongs to the UPF0091 family.

This chain is UPF0091 protein PH1428, found in Pyrococcus horikoshii (strain ATCC 700860 / DSM 12428 / JCM 9974 / NBRC 100139 / OT-3).